Here is a 153-residue protein sequence, read N- to C-terminus: ORM1-like protein 1 (153 aa).

Over 1–26 the chain is Cytoplasmic; it reads MNVGVAHSEVNPNTRVMNSRGMWLTY. A run of 2 helical transmembrane segments spans residues 27-46 and 47-67; these read ALGVGMLHIVLLSIPFFSVP and VAWTLTNVIHNLGMYVFLHAV. Topologically, residues 68–100 are cytoplasmic; it reads KGTPFETPDQGKARLLTHWEQLDYGVQFTSSRK. The helical transmembrane segment at 101–121 threads the bilayer; it reads FLTISPIILYFLASFYTKYDP. Residues 122–123 lie on the Extracellular side of the membrane; sequence TH. The chain crosses the membrane as a helical span at residues 124 to 144; sequence FFINTASLLSVLIPKLPQLHG. Over 145–153 the chain is Cytoplasmic; it reads VRIFGINKY.

It belongs to the ORM family. As to quaternary structure, ceramide-sensitive subunit of the serine palmitoyltransferase (SPT) complex, which is also composed of SPTLC1, SPTLC2/3 and SPTSSA/B.

It localises to the endoplasmic reticulum membrane. In terms of biological role, plays an essential role in the homeostatic regulation of sphingolipid de novo biosynthesis by modulating the activity of the serine palmitoyltransferase (SPT) in response to ceramide levels. When complexed to SPT, the binding of ceramides to its N-terminus stabilizes a conformation that block SPT substrate entry, hence preventing SPT catalytic activity. Through this mechanism, maintains ceramide levels at sufficient concentrations for the production of complex sphingolipids, but which prevents the accumulation of ceramides to levels that trigger apoptosis. This chain is ORM1-like protein 1 (ormdl1), found in Xenopus laevis (African clawed frog).